The following is a 258-amino-acid chain: Trans-aconitate 2-methyltransferase (258 aa).

It belongs to the methyltransferase superfamily. Tam family.

It localises to the cytoplasm. The enzyme catalyses trans-aconitate + S-adenosyl-L-methionine = (E)-3-(methoxycarbonyl)pent-2-enedioate + S-adenosyl-L-homocysteine. In terms of biological role, catalyzes the S-adenosylmethionine monomethyl esterification of trans-aconitate. This Yersinia pseudotuberculosis serotype O:1b (strain IP 31758) protein is Trans-aconitate 2-methyltransferase.